A 783-amino-acid polypeptide reads, in one-letter code: Type 4 coupling protein DotL (783 aa).

Residues 47-67 form a helical membrane-spanning segment; the sequence is VSYYFSEAATFLLIMGGIFFL. Residues 100-500 form an ATPase domain region; it reads NIARGITFFG…ICMKLEDPTE (401 aa). The interaction with IcmS/IcmW stretch occupies residues 671–773; the sequence is VEGALTIFSK…SAKISAEREK (103 aa).

The T4BSS is a complex nanomachine composed of several subcomplexes. This subunit is part of the Type IV Coupling Complex (T4CC), a subcomplex composed of the DotLMNYZ core and the IcmSW-LvgA adapter subunits, linked by the C-terminal tail of DotL. Six DotLMNYZ hetero-pentameric units may assemble into a hexameric nanomachine, forming an inner membrane channel for effectors to pass through. Interacts directly with DotM. Interacts directly, via its C-terminal region, with the type IV adapter proteins IcmS and IcmW. Also interacts with DotN and LvgA via its C-terminal region.

The protein resides in the cell inner membrane. Component of the Dot/Icm type IVB secretion system (T4BSS), which is used to inject bacterial effector proteins into eukaryotic host cells. Part of a subcomplex which recruits effector proteins and delivers them to the core transmembrane subcomplex. Plays a central role in the assembly of the subcomplex. Required for the recruitment of IcmS and IcmW to the inner membrane and for the translocation of adapter-dependent substrates. May have ATPase activity. This chain is Type 4 coupling protein DotL, found in Legionella pneumophila subsp. pneumophila (strain Philadelphia 1 / ATCC 33152 / DSM 7513).